The following is a 239-amino-acid chain: Ribonuclease PH (239 aa).

Phosphate contacts are provided by residues R86 and 124–126 (GTR).

It belongs to the RNase PH family. Homohexameric ring arranged as a trimer of dimers.

It catalyses the reaction tRNA(n+1) + phosphate = tRNA(n) + a ribonucleoside 5'-diphosphate. In terms of biological role, phosphorolytic 3'-5' exoribonuclease that plays an important role in tRNA 3'-end maturation. Removes nucleotide residues following the 3'-CCA terminus of tRNAs; can also add nucleotides to the ends of RNA molecules by using nucleoside diphosphates as substrates, but this may not be physiologically important. Probably plays a role in initiation of 16S rRNA degradation (leading to ribosome degradation) during starvation. This chain is Ribonuclease PH, found in Rhizobium etli (strain ATCC 51251 / DSM 11541 / JCM 21823 / NBRC 15573 / CFN 42).